The chain runs to 92 residues: Putative transmembrane protein ORF92 (92 aa).

3 consecutive transmembrane segments (helical) span residues 11–28, 32–52, and 54–74; these read FVKG…TYAI, FFSS…LFAS, and FLFD…IGVG.

The protein localises to the host membrane. The chain is Putative transmembrane protein ORF92 from Acidianus convivator (ABV).